Here is a 261-residue protein sequence, read N- to C-terminus: DNA repair protein RecO (261 aa).

This sequence belongs to the RecO family.

In terms of biological role, involved in DNA repair and RecF pathway recombination. The protein is DNA repair protein RecO of Chlorobium phaeobacteroides (strain BS1).